We begin with the raw amino-acid sequence, 463 residues long: Elongation factor 1-alpha 1 (463 aa).

Residues 5 to 242 (KIHINIVVIG…DAILPPARPT (238 aa)) enclose the tr-type G domain. The tract at residues 14–21 (GHVDSGKS) is G1. 14–21 (GHVDSGKS) contacts GTP. Positions 70-74 (GITID) are G2. The tract at residues 91 to 94 (DAPG) is G3. Residues 91-95 (DAPGH) and 153-156 (NKMD) contribute to the GTP site. The tract at residues 153-156 (NKMD) is G4. Residues 194–196 (SGW) form a G5 region. 2 positions are modified to 5-glutamyl glycerylphosphorylethanolamine: E301 and E374.

This sequence belongs to the TRAFAC class translation factor GTPase superfamily. Classic translation factor GTPase family. EF-Tu/EF-1A subfamily.

It is found in the cytoplasm. Functionally, this protein promotes the GTP-dependent binding of aminoacyl-tRNA to the A-site of ribosomes during protein biosynthesis. This chain is Elongation factor 1-alpha 1, found in Drosophila melanogaster (Fruit fly).